A 166-amino-acid chain; its full sequence is 3-isopropylmalate dehydratase small subunit (166 aa).

Belongs to the LeuD family. LeuD type 2 subfamily. In terms of assembly, heterodimer of LeuC and LeuD.

It carries out the reaction (2R,3S)-3-isopropylmalate = (2S)-2-isopropylmalate. Its pathway is amino-acid biosynthesis; L-leucine biosynthesis; L-leucine from 3-methyl-2-oxobutanoate: step 2/4. Catalyzes the isomerization between 2-isopropylmalate and 3-isopropylmalate, via the formation of 2-isopropylmaleate. The sequence is that of 3-isopropylmalate dehydratase small subunit from Aliarcobacter butzleri (strain RM4018) (Arcobacter butzleri).